The chain runs to 3535 residues: Lysosomal-trafficking regulator (3535 aa).

The disordered stretch occupies residues 412 to 436; the sequence is MESSASTAMPKQQQHPRHKRQRSSQ. Residues 689-736 form a WD 1 repeat; that stretch reads TLSRRLIQLQLNSSDRASQLFQALLYKCSKHSRAKFWLDESSTPAKLE. Polar residues predominate over residues 1066–1096; the sequence is STHQEPTGVVNSPSGDSQQPRPRARSFNSGS. Disordered regions lie at residues 1066–1132 and 1592–1613; these read STHQ…NAGV and GEGQ…TLDG. Residues 1596–1610 are compositionally biased toward low complexity; it reads PTGRSPGSSSSSRST. Residues 2686–2784 form the BEACH-type PH domain; the sequence is SLNSQILYNF…MREVFCDKIV (99 aa). The 298-residue stretch at 2784–3081 folds into the BEACH domain; it reads VATPDQSKVI…QLFKSPHPAS (298 aa). The interval 3254–3287 is disordered; the sequence is GIGGGGSERVDEAGNLHPTSSASSVNSSSISSGG. The span at 3273 to 3285 shows a compositional bias: low complexity; that stretch reads SSASSVNSSSISS. WD repeat units lie at residues 3307–3346, 3442–3486, and 3489–3527; these read RHTD…YVRT, VHED…FVSE, and TGTS…GNAP.

Interacts with Rab5; the interaction is independent of GDP or GTP. Interacts with msps.

It localises to the vesicle. The protein localises to the cytoplasm. Its subcellular location is the cytoskeleton. The protein resides in the spindle. It is found in the spindle pole. In terms of biological role, adapter protein that regulates intracellular membrane fusion reactions. Regulates the fusion of lysosome-related organelles. Promotes microtubules nucleation and centrosomal recruitment of microtubule nucleating proteins such as msps. In syncytial embryos, during the formation of yolk granules, suppresses vesicle fusion events with lipid droplets, possibly via interaction with Rab5. In the eye, regulates pigment granules size. In hemocytes, required for the late steps of bacteria phagocytosis. In fat body, required for autophagosome maturation. This Drosophila melanogaster (Fruit fly) protein is Lysosomal-trafficking regulator.